A 154-amino-acid chain; its full sequence is Myoglobin-2 (154 aa).

One can recognise a Globin domain in the interval 2–148 (GLSDGEWQLV…FRKDIATKYK (147 aa)). His-65 lines the nitrite pocket. His-65 contributes to the O2 binding site. His-94 serves as a coordination point for heme b.

This sequence belongs to the globin family. In terms of assembly, monomeric.

Its subcellular location is the cytoplasm. The protein resides in the sarcoplasm. It carries out the reaction Fe(III)-heme b-[protein] + nitric oxide + H2O = Fe(II)-heme b-[protein] + nitrite + 2 H(+). The catalysed reaction is H2O2 + AH2 = A + 2 H2O. Its function is as follows. Monomeric heme protein which primary function is to store oxygen and facilitate its diffusion within muscle tissues. Reversibly binds oxygen through a pentacoordinated heme iron and enables its timely and efficient release as needed during periods of heightened demand. Depending on the oxidative conditions of tissues and cells, and in addition to its ability to bind oxygen, it also has a nitrite reductase activity whereby it regulates the production of bioactive nitric oxide. Under stress conditions, like hypoxia and anoxia, it also protects cells against reactive oxygen species thanks to its pseudoperoxidase activity. The sequence is that of Myoglobin-2 (MB2) from Stenella attenuata (Pantropical spotted dolphin).